The sequence spans 631 residues: 1,4-alpha-glucan branching enzyme GlgB (631 aa).

The active-site Nucleophile is D309. The active-site Proton donor is E362.

This sequence belongs to the glycosyl hydrolase 13 family. GlgB subfamily. Monomer.

The enzyme catalyses Transfers a segment of a (1-&gt;4)-alpha-D-glucan chain to a primary hydroxy group in a similar glucan chain.. Its pathway is glycan biosynthesis; glycogen biosynthesis. Catalyzes the formation of the alpha-1,6-glucosidic linkages in glycogen by scission of a 1,4-alpha-linked oligosaccharide from growing alpha-1,4-glucan chains and the subsequent attachment of the oligosaccharide to the alpha-1,6 position. The chain is 1,4-alpha-glucan branching enzyme GlgB from Marinobacter nauticus (strain ATCC 700491 / DSM 11845 / VT8) (Marinobacter aquaeolei).